The chain runs to 511 residues: 2-isopropylmalate synthase (511 aa).

Positions 5 to 267 constitute a Pyruvate carboxyltransferase domain; sequence LIIFDTTLRD…DTNIDTMHIL (263 aa). Asp14, His202, His204, and Asn238 together coordinate Mn(2+). The regulatory domain stretch occupies residues 393–511; the sequence is KLVSLKVCTE…TVTNKAHPQI (119 aa).

This sequence belongs to the alpha-IPM synthase/homocitrate synthase family. LeuA type 1 subfamily. As to quaternary structure, homodimer. Mn(2+) is required as a cofactor.

The protein localises to the cytoplasm. It carries out the reaction 3-methyl-2-oxobutanoate + acetyl-CoA + H2O = (2S)-2-isopropylmalate + CoA + H(+). Its pathway is amino-acid biosynthesis; L-leucine biosynthesis; L-leucine from 3-methyl-2-oxobutanoate: step 1/4. Its function is as follows. Catalyzes the condensation of the acetyl group of acetyl-CoA with 3-methyl-2-oxobutanoate (2-ketoisovalerate) to form 3-carboxy-3-hydroxy-4-methylpentanoate (2-isopropylmalate). This chain is 2-isopropylmalate synthase, found in Vesicomyosocius okutanii subsp. Calyptogena okutanii (strain HA).